An 835-amino-acid chain; its full sequence is Protein bicaudal D homolog 1 (835 aa).

Residues 1 to 264 adopt a coiled-coil conformation; that stretch reads MAAEEALKTV…YINLSDSHIS (264 aa). Positions 278–297 are disordered; it reads EPNNDDKMNGHIHGPLGKLN. Residues 320-519 adopt a coiled-coil conformation; the sequence is ELNISEIQKL…TFSEELAQLY (200 aa). Disordered regions lie at residues 545–616 and 800–835; these read RSGS…LDTS and DHEQ…SAHN. Positions 557 to 572 are enriched in low complexity; that stretch reads GLLSPRLSRRGVSSPV. Basic and acidic residues predominate over residues 581 to 590; that stretch reads VSKENTETSK. Positions 591-604 are enriched in low complexity; sequence EPSPTKTPTISPVI. The stretch at 663–803 forms a coiled coil; that stretch reads IDKDKEALME…LEDLEFDHEQ (141 aa). The tract at residues 663 to 803 is interaction with RAB6A; the sequence is IDKDKEALME…LEDLEFDHEQ (141 aa).

Belongs to the BicD family. Interacts with RAB6A. Interacts (via C-terminus) with RAB6B (GTP-bound); the interaction is direct. Interacts with CLIP-115 and KIFC2. In terms of tissue distribution, expressed in the brain, heart and skeletal muscle.

It is found in the golgi apparatus. In terms of biological role, regulates coat complex coatomer protein I (COPI)-independent Golgi-endoplasmic reticulum transport by recruiting the dynein-dynactin motor complex. This Mus musculus (Mouse) protein is Protein bicaudal D homolog 1 (Bicd1).